The sequence spans 113 residues: Photosystem II reaction center Psb28 protein (113 aa).

It belongs to the Psb28 family. Part of the photosystem II complex.

Its subcellular location is the cellular thylakoid membrane. This is Photosystem II reaction center Psb28 protein from Nostoc punctiforme (strain ATCC 29133 / PCC 73102).